Reading from the N-terminus, the 647-residue chain is Acetyl-coenzyme A synthetase (647 aa).

CoA contacts are provided by residues 190 to 193 (RGGK), Thr-310, and Asn-334. Residues 386–388 (GEP), 410–415 (DTWWQT), Asp-499, and Arg-514 each bind ATP. Ser-522 provides a ligand contact to CoA. Position 525 (Arg-525) interacts with ATP. Mg(2+) contacts are provided by Val-536, His-538, and Val-541. Arg-583 is a binding site for CoA. Residue Lys-608 is modified to N6-acetyllysine.

It belongs to the ATP-dependent AMP-binding enzyme family. The cofactor is Mg(2+). In terms of processing, acetylated. Deacetylation by the SIR2-homolog deacetylase activates the enzyme.

The catalysed reaction is acetate + ATP + CoA = acetyl-CoA + AMP + diphosphate. In terms of biological role, catalyzes the conversion of acetate into acetyl-CoA (AcCoA), an essential intermediate at the junction of anabolic and catabolic pathways. AcsA undergoes a two-step reaction. In the first half reaction, AcsA combines acetate with ATP to form acetyl-adenylate (AcAMP) intermediate. In the second half reaction, it can then transfer the acetyl group from AcAMP to the sulfhydryl group of CoA, forming the product AcCoA. This Xanthomonas campestris pv. campestris (strain 8004) protein is Acetyl-coenzyme A synthetase.